A 682-amino-acid polypeptide reads, in one-letter code: 1,4-alpha-glucan-branching enzyme (682 aa).

(1,4-alpha-D-glucosyl)n contacts are provided by W88 and K124. D342 functions as the Nucleophile in the catalytic mechanism. The Proton donor role is filled by E397.

It belongs to the glycosyl hydrolase 13 family. GlgB subfamily.

It is found in the cytoplasm. It carries out the reaction Transfers a segment of a (1-&gt;4)-alpha-D-glucan chain to a primary hydroxy group in a similar glucan chain.. It participates in glycan biosynthesis; glycogen biosynthesis. In terms of biological role, glycogen-branching enzyme participates in the glycogen biosynthetic process along with glycogenin and glycogen synthase. Generates alpha-1,6-glucosidic branches from alpha-1,4-linked glucose chains, to increase solubility of the glycogen polymer. This is 1,4-alpha-glucan-branching enzyme (GLC3) from Cryptococcus neoformans var. neoformans serotype D (strain B-3501A) (Filobasidiella neoformans).